Reading from the N-terminus, the 466-residue chain is Adenosylhomocysteinase (466 aa).

Residues threonine 57, aspartate 132, and glutamate 192 each contribute to the substrate site. NAD(+) is bound at residue threonine 193–threonine 195. Substrate-binding residues include lysine 222 and aspartate 226. Residues asparagine 227, glycine 256–glycine 261, glutamate 279, asparagine 314, isoleucine 335–histidine 337, and asparagine 380 contribute to the NAD(+) site.

The protein belongs to the adenosylhomocysteinase family. The cofactor is NAD(+).

The protein localises to the cytoplasm. It carries out the reaction S-adenosyl-L-homocysteine + H2O = L-homocysteine + adenosine. It functions in the pathway amino-acid biosynthesis; L-homocysteine biosynthesis; L-homocysteine from S-adenosyl-L-homocysteine: step 1/1. In terms of biological role, may play a key role in the regulation of the intracellular concentration of adenosylhomocysteine. This is Adenosylhomocysteinase from Sinorhizobium medicae (strain WSM419) (Ensifer medicae).